Reading from the N-terminus, the 251-residue chain is NADPH-dependent oxidoreductase (251 aa).

The protein belongs to the flavin oxidoreductase frp family. It depends on FMN as a cofactor.

Its function is as follows. Reduces FMN, organic nitro compounds and disulfide DTNB. Involved in maintenance of the cellular redox state and the disulfide stress response. This is NADPH-dependent oxidoreductase (nfrA) from Staphylococcus aureus (strain MSSA476).